An 83-amino-acid polypeptide reads, in one-letter code: Cytochrome b559 subunit alpha (83 aa).

A helical transmembrane segment spans residues 21-35 (VIHSITIPSLFIAGW). A heme-binding site is contributed by His-23.

This sequence belongs to the PsbE/PsbF family. As to quaternary structure, heterodimer of an alpha subunit and a beta subunit. PSII is composed of 1 copy each of membrane proteins PsbA, PsbB, PsbC, PsbD, PsbE, PsbF, PsbH, PsbI, PsbJ, PsbK, PsbL, PsbM, PsbT, PsbX, PsbY, PsbZ, Psb30/Ycf12, at least 3 peripheral proteins of the oxygen-evolving complex and a large number of cofactors. It forms dimeric complexes. Heme b is required as a cofactor.

It localises to the plastid. Its subcellular location is the chloroplast thylakoid membrane. Its function is as follows. This b-type cytochrome is tightly associated with the reaction center of photosystem II (PSII). PSII is a light-driven water:plastoquinone oxidoreductase that uses light energy to abstract electrons from H(2)O, generating O(2) and a proton gradient subsequently used for ATP formation. It consists of a core antenna complex that captures photons, and an electron transfer chain that converts photonic excitation into a charge separation. The chain is Cytochrome b559 subunit alpha from Citrus sinensis (Sweet orange).